The chain runs to 353 residues: MYLIYLRLVFCCALLLGCGDNSKFDSATDLPVEQEQEQETEQEGEPEESSEQDLVEEVDWKDIPVPADAGPNMKWEFQEISDNFEYEAPADNKGSEFLEKWDDFYHNAWAGPGLTEWKRDRSYVADGELKMWATRKPGSDKINMGCITSKTRVVYPVYIEARAKVMNSTLASDVWLLSADDTQEIDILEAYGADYSESAGKDHSYFSKKVHISHHVFIRDPFQDYQPKDAGSWFEDGTVWNKEFHRFGVYWRDPWHLEYYIDGVLVRTVSGKDIIDPKHFTNTTDPGNTEIDTRTGLNKEMDIIINTEDQTWRSSPASGLQSNTYTPTDNELSNIENNTFGVDWIRIYKPVEK.

The signal sequence occupies residues 1–17 (MYLIYLRLVFCCALLLG). Residue Cys-18 is the site of N-palmitoyl cysteine attachment. A lipid anchor (S-diacylglycerol cysteine) is attached at Cys-18. The tract at residues 30–58 (LPVEQEQEQETEQEGEPEESSEQDLVEEV) is disordered. The span at 32–58 (VEQEQEQETEQEGEPEESSEQDLVEEV) shows a compositional bias: acidic residues. The GH16 domain occupies 58 to 353 (VDWKDIPVPA…WIRIYKPVEK (296 aa)). Residues 105-107 (YHN) and Asp-181 contribute to the substrate site. Glu-184 acts as the Nucleophile in catalysis. Glu-189 (proton donor) is an active-site residue. Residues His-215, Arg-219, Asp-224, Gln-226, and Glu-308 each coordinate substrate.

This sequence belongs to the glycosyl hydrolase 16 family. As to quaternary structure, homodimer.

The protein localises to the cell outer membrane. It catalyses the reaction Hydrolysis of (1-&gt;4)-beta-D-galactosidic linkages in agarose, giving the tetramer as the predominant product.. Functionally, cleaves the beta-1,4-linkages between beta-D-galactose and alpha-L-3,6-anhydro-galactose residues in agarose. Cleaves agarose in a random manner with retention of the anomeric-bond configuration, producing beta-anomers that give rise progressively to alpha-anomers when mutarotation takes place. Also tolerant to hybrid substrates containing C6-sulfate groups at the -4, +1, and +3 positions. The sequence is that of Beta-agarase B (agaB) from Zobellia galactanivorans (strain DSM 12802 / CCUG 47099 / CIP 106680 / NCIMB 13871 / Dsij).